Here is a 227-residue protein sequence, read N- to C-terminus: Monoamine regulon transcriptional regulator (227 aa).

The HTH luxR-type domain maps to 155 to 220 (EDDLPAILTA…ELVSRTWMPA (66 aa)). A DNA-binding region (H-T-H motif) is located at residues 179–198 (NKLIARQLDISLSTVKTHLR).

Functionally, positive regulatory protein for the induction of arylsulfatase synthesis (maoA), tyramine oxidase (tynA), maoC, maoE/F operon, and atsB/A operon which are all regulated by monoamines, and included under the common term of monoamine regulon. This is Monoamine regulon transcriptional regulator (moaR) from Klebsiella aerogenes (Enterobacter aerogenes).